The following is a 298-amino-acid chain: Porphobilinogen deaminase (298 aa).

Cysteine 239 is subject to S-(dipyrrolylmethanemethyl)cysteine.

This sequence belongs to the HMBS family. As to quaternary structure, monomer. The cofactor is dipyrromethane.

The catalysed reaction is 4 porphobilinogen + H2O = hydroxymethylbilane + 4 NH4(+). Its pathway is porphyrin-containing compound metabolism; protoporphyrin-IX biosynthesis; coproporphyrinogen-III from 5-aminolevulinate: step 2/4. Tetrapolymerization of the monopyrrole PBG into the hydroxymethylbilane pre-uroporphyrinogen in several discrete steps. The polypeptide is Porphobilinogen deaminase (Ehrlichia chaffeensis (strain ATCC CRL-10679 / Arkansas)).